The primary structure comprises 110 residues: MGYSGKPHHQLDGEIRESTDGKKWVIAGIPSRSPLKQINLSPGVTVTETEEQDQCPTTPTAVSVRIPRVPPCPAAPKKRKPSLKCSYVTVTRDYFSPPDLETVFIQRASY.

As to quaternary structure, interacts with CDKA-1 and D-type cyclins. In terms of tissue distribution, expressed in the root vascular tissue.

In terms of biological role, probable cyclin-dependent protein kinase (CDK) inhibitor that functions as a repressor of mitosis in the endoreduplication cell cycle. In Arabidopsis thaliana (Mouse-ear cress), this protein is Cyclin-dependent protein kinase inhibitor SMR8.